Reading from the N-terminus, the 292-residue chain is Peroxisomal 2,4-dienoyl-CoA reductase [(3E)-enoyl-CoA-producing] (292 aa).

Residues 35–40, 60–64, and D86 contribute to the NADP(+) site; these read GGGSGI and RSLPR. Residue R60 participates in substrate binding. Residues R88, F118, and 126-128 contribute to the substrate site; that span reads SFN. K151 is subject to N6-acetyllysine. NADP(+)-binding positions include K182 and 208 to 214; that span reads PGAISGT. R219 is a substrate binding site. Residue S287 is modified to Phosphoserine. The Microbody targeting signal motif lies at 290 to 292; the sequence is AKL. An N6-acetyllysine modification is found at K291.

It belongs to the short-chain dehydrogenases/reductases (SDR) family. 2,4-dienoyl-CoA reductase subfamily. In terms of assembly, monomer, dimer and oligomer.

The protein resides in the peroxisome. It carries out the reaction a (2E,4Z)-dienoyl-CoA + NADPH + H(+) = a 4,5-saturated-(3E)-enoyl-CoA + NADP(+). The catalysed reaction is a (2E,4E)-dienoyl-CoA + NADPH + H(+) = a 4,5-saturated-(3E)-enoyl-CoA + NADP(+). It catalyses the reaction (2E,4E)-hexadienoyl-CoA + NADPH + H(+) = (3E)-hexenoyl-CoA + NADP(+). The enzyme catalyses (2E,4E)-decadienoyl-CoA + NADPH + H(+) = (3E)-decenoyl-CoA + NADP(+). It carries out the reaction (2E,4Z,7Z,10Z,13Z,16Z,19Z)-docosaheptaenoyl-CoA + NADPH + H(+) = (3E,7Z,10Z,13Z,16Z,19Z)-docosahexaenoyl-CoA + NADP(+). In terms of biological role, auxiliary enzyme of beta-oxidation. Participates in the degradation of unsaturated fatty enoyl-CoA esters having double bonds in both even- and odd-numbered positions in peroxisome. Catalyzes the NADP-dependent reduction of 2,4-dienoyl-CoA to yield trans-3-enoyl-CoA. Has activity towards short and medium chain 2,4-dienoyl-CoAs, but also towards 2,4,7,10,13,16,19-docosaheptaenoyl-CoA, suggesting that it does not constitute a rate limiting step in the peroxisomal degradation of docosahexaenoic acid. This Rattus norvegicus (Rat) protein is Peroxisomal 2,4-dienoyl-CoA reductase [(3E)-enoyl-CoA-producing] (Decr2).